The primary structure comprises 219 residues: Octanoyltransferase (219 aa).

One can recognise a BPL/LPL catalytic domain in the interval 24–212 (KFRRECILFL…NLNSFLGPIS (189 aa)). Substrate-binding positions include 69-76 (RGGDFTAH), 140-142 (SIG), and 153-155 (GVA). Residue Cys-171 is the Acyl-thioester intermediate of the active site.

It belongs to the LipB family.

It is found in the cytoplasm. The catalysed reaction is octanoyl-[ACP] + L-lysyl-[protein] = N(6)-octanoyl-L-lysyl-[protein] + holo-[ACP] + H(+). It participates in protein modification; protein lipoylation via endogenous pathway; protein N(6)-(lipoyl)lysine from octanoyl-[acyl-carrier-protein]: step 1/2. Catalyzes the transfer of endogenously produced octanoic acid from octanoyl-acyl-carrier-protein onto the lipoyl domains of lipoate-dependent enzymes. Lipoyl-ACP can also act as a substrate although octanoyl-ACP is likely to be the physiological substrate. This chain is Octanoyltransferase, found in Leptospira borgpetersenii serovar Hardjo-bovis (strain JB197).